An 877-amino-acid polypeptide reads, in one-letter code: Alanine--tRNA ligase (877 aa).

Positions 556, 560, 657, and 661 each coordinate Zn(2+).

This sequence belongs to the class-II aminoacyl-tRNA synthetase family. The cofactor is Zn(2+).

The protein localises to the cytoplasm. It catalyses the reaction tRNA(Ala) + L-alanine + ATP = L-alanyl-tRNA(Ala) + AMP + diphosphate. Its function is as follows. Catalyzes the attachment of alanine to tRNA(Ala) in a two-step reaction: alanine is first activated by ATP to form Ala-AMP and then transferred to the acceptor end of tRNA(Ala). Also edits incorrectly charged Ser-tRNA(Ala) and Gly-tRNA(Ala) via its editing domain. The protein is Alanine--tRNA ligase of Wolbachia pipientis wMel.